The following is a 457-amino-acid chain: Acetylcholine receptor subunit alpha (457 aa).

The N-terminal stretch at 1 to 20 is a signal peptide; the sequence is MELSTVLLLLGLCSAGLVLG. The Extracellular portion of the chain corresponds to 21 to 230; it reads SEHETRLVAK…ITYHFVMQRL (210 aa). Disulfide bonds link Cys-148–Cys-162 and Cys-212–Cys-213. A glycan (N-linked (GlcNAc...) asparagine) is linked at Asn-161. Transmembrane regions (helical) follow at residues 231–255, 263–281, and 297–316; these read PLYF…VFYL, MTLS…LVIV, and YMLF…VIVI. Over 317–428 the chain is Cytoplasmic; sequence NTHHRSPSTH…WKYVAMVMDH (112 aa). A helical transmembrane segment spans residues 429–447; it reads ILLGVFMLVCLIGTLAVFA.

Belongs to the ligand-gated ion channel (TC 1.A.9) family. Acetylcholine receptor (TC 1.A.9.1) subfamily. Alpha-1/CHRNA1 sub-subfamily. One of the alpha chains that assemble within the acetylcholine receptor, a pentamer of two alpha chains, a beta, a delta, and a gamma (in immature muscle) or epsilon (in mature muscle) chains. The muscle heteropentamer composed of alpha-1, beta-1, delta, epsilon subunits interacts with the alpha-conotoxin ImII.

The protein localises to the postsynaptic cell membrane. Its subcellular location is the cell membrane. The catalysed reaction is K(+)(in) = K(+)(out). It carries out the reaction Na(+)(in) = Na(+)(out). Upon acetylcholine binding, the AChR responds by an extensive change in conformation that affects all subunits and leads to opening of an ion-conducting channel across the plasma membrane. In Mus musculus (Mouse), this protein is Acetylcholine receptor subunit alpha (Chrna1).